We begin with the raw amino-acid sequence, 450 residues long: Phosphoglucosamine mutase (450 aa).

S102 serves as the catalytic Phosphoserine intermediate. Mg(2+) is bound by residues S102, D244, D246, and D248. S102 bears the Phosphoserine mark.

Belongs to the phosphohexose mutase family. Mg(2+) is required as a cofactor. Post-translationally, activated by phosphorylation.

It carries out the reaction alpha-D-glucosamine 1-phosphate = D-glucosamine 6-phosphate. In terms of biological role, catalyzes the conversion of glucosamine-6-phosphate to glucosamine-1-phosphate. This is Phosphoglucosamine mutase from Nitratidesulfovibrio vulgaris (strain ATCC 29579 / DSM 644 / CCUG 34227 / NCIMB 8303 / VKM B-1760 / Hildenborough) (Desulfovibrio vulgaris).